The following is a 348-amino-acid chain: Isopentenyl-diphosphate delta-isomerase (348 aa).

Substrate is bound at residue 14-15; that stretch reads RK. Residues Ser-72, 73–75, Ser-103, and Asn-131 each bind FMN; that span reads SMT. Position 103–105 (103–105) interacts with substrate; the sequence is SQR. Gln-166 lines the substrate pocket. Residue Glu-167 participates in Mg(2+) binding. FMN contacts are provided by residues Lys-198, Thr-228, 278 to 280, and 299 to 300; these read GIR and AR.

Belongs to the IPP isomerase type 2 family. As to quaternary structure, homooctamer. Dimer of tetramers. The cofactor is FMN. NADPH serves as cofactor. Mg(2+) is required as a cofactor.

The protein localises to the cytoplasm. The catalysed reaction is isopentenyl diphosphate = dimethylallyl diphosphate. Its function is as follows. Involved in the biosynthesis of isoprenoids. Catalyzes the 1,3-allylic rearrangement of the homoallylic substrate isopentenyl (IPP) to its allylic isomer, dimethylallyl diphosphate (DMAPP). This Synechococcus sp. (strain ATCC 27144 / PCC 6301 / SAUG 1402/1) (Anacystis nidulans) protein is Isopentenyl-diphosphate delta-isomerase.